The sequence spans 81 residues: ATP synthase subunit c (81 aa).

2 helical membrane passes run 6 to 26 (AAAS…GPGI) and 57 to 77 (LAFM…LLFA).

It belongs to the ATPase C chain family. F-type ATPases have 2 components, F(1) - the catalytic core - and F(0) - the membrane proton channel. F(1) has five subunits: alpha(3), beta(3), gamma(1), delta(1), epsilon(1). F(0) has four main subunits: a(1), b(1), b'(1) and c(10-14). The alpha and beta chains form an alternating ring which encloses part of the gamma chain. F(1) is attached to F(0) by a central stalk formed by the gamma and epsilon chains, while a peripheral stalk is formed by the delta, b and b' chains.

Its subcellular location is the cellular thylakoid membrane. F(1)F(0) ATP synthase produces ATP from ADP in the presence of a proton or sodium gradient. F-type ATPases consist of two structural domains, F(1) containing the extramembraneous catalytic core and F(0) containing the membrane proton channel, linked together by a central stalk and a peripheral stalk. During catalysis, ATP synthesis in the catalytic domain of F(1) is coupled via a rotary mechanism of the central stalk subunits to proton translocation. In terms of biological role, key component of the F(0) channel; it plays a direct role in translocation across the membrane. A homomeric c-ring of between 10-14 subunits forms the central stalk rotor element with the F(1) delta and epsilon subunits. This Synechocystis sp. (strain ATCC 27184 / PCC 6803 / Kazusa) protein is ATP synthase subunit c.